The primary structure comprises 353 residues: Phosphoribosylformylglycinamidine cyclo-ligase (353 aa).

Belongs to the AIR synthase family.

It is found in the cytoplasm. It catalyses the reaction 2-formamido-N(1)-(5-O-phospho-beta-D-ribosyl)acetamidine + ATP = 5-amino-1-(5-phospho-beta-D-ribosyl)imidazole + ADP + phosphate + H(+). The protein operates within purine metabolism; IMP biosynthesis via de novo pathway; 5-amino-1-(5-phospho-D-ribosyl)imidazole from N(2)-formyl-N(1)-(5-phospho-D-ribosyl)glycinamide: step 2/2. This is Phosphoribosylformylglycinamidine cyclo-ligase from Magnetococcus marinus (strain ATCC BAA-1437 / JCM 17883 / MC-1).